We begin with the raw amino-acid sequence, 785 residues long: Probable ATP-dependent RNA helicase ddx17 (785 aa).

4 stretches are compositionally biased toward low complexity: residues 1 to 11 (MSYNSSNSGSG), 18 to 37 (SGNS…GNRS), 49 to 95 (SYNR…YGPS), and 105 to 177 (GSSS…NGYS). Residues 1–233 (MSYNSSNSGS…TPSTSYNGGS (233 aa)) form a disordered region. The span at 178-191 (KPTSNYSYSNGYTG) shows a compositional bias: polar residues. A compositionally biased stretch (low complexity) spans 192-233 (PTTNYSSYSNGYSTPPTSTSTSSSSTTTTTTTTPSTSYNGGS). The Q motif motif lies at 384 to 412 (MQFTQAPFPGYLMKEIIGAGFPNPTPIQS). The Helicase ATP-binding domain maps to 415-590 (WPIALKGRDI…HDFLTDHIQV (176 aa)). 428–435 (AKTGSGKT) is an ATP binding site. The DEAD box signature appears at 538 to 541 (DEAD). Residues 602-763 (NVRQIVEVCQ…KIPIELSNLS (162 aa)) enclose the Helicase C-terminal domain. Over residues 764-774 (VTPSTSSNTKK) the composition is skewed to polar residues. A disordered region spans residues 764 to 785 (VTPSTSSNTKKFSPYPTYSKRY).

It belongs to the DEAD box helicase family. DDX5/DBP2 subfamily.

Its subcellular location is the cytoplasm. It localises to the nucleus. It catalyses the reaction ATP + H2O = ADP + phosphate + H(+). Probable ATP-dependent RNA helicase which may be involved nonsense-mediated mRNA decay and ribosome biogenesis through rRNA processing. This chain is Probable ATP-dependent RNA helicase ddx17 (ddx17), found in Dictyostelium discoideum (Social amoeba).